A 187-amino-acid polypeptide reads, in one-letter code: Large ribosomal subunit protein uL6 (187 aa).

Residues 159-187 (PYKGKGIRYKGEQLSSNPERLQVRSKEVR) form a disordered region.

It belongs to the universal ribosomal protein uL6 family. Part of the 50S ribosomal subunit.

Its function is as follows. This protein binds to the 23S rRNA, and is important in its secondary structure. It is located near the subunit interface in the base of the L7/L12 stalk, and near the tRNA binding site of the peptidyltransferase center. This Aquifex pyrophilus protein is Large ribosomal subunit protein uL6.